The following is a 489-amino-acid chain: tRNA(Ile)-lysidine synthase (489 aa).

Serine 35–serine 40 is a binding site for ATP.

It belongs to the tRNA(Ile)-lysidine synthase family.

It localises to the cytoplasm. The enzyme catalyses cytidine(34) in tRNA(Ile2) + L-lysine + ATP = lysidine(34) in tRNA(Ile2) + AMP + diphosphate + H(+). In terms of biological role, ligates lysine onto the cytidine present at position 34 of the AUA codon-specific tRNA(Ile) that contains the anticodon CAU, in an ATP-dependent manner. Cytidine is converted to lysidine, thus changing the amino acid specificity of the tRNA from methionine to isoleucine. This chain is tRNA(Ile)-lysidine synthase, found in Burkholderia mallei (strain ATCC 23344).